We begin with the raw amino-acid sequence, 581 residues long: Pyridine nucleotide-disulfide oxidoreductase domain-containing protein 2 (581 aa).

Valine 38–glycine 71 is an FAD binding site.

This sequence belongs to the carotenoid/retinoid oxidoreductase family. In terms of assembly, interacts with COX5B; this interaction may contribute to localize PYROXD2 to the inner face of the inner mitochondrial membrane.

The protein resides in the mitochondrion matrix. Its function is as follows. Probable oxidoreductase that may play a role as regulator of mitochondrial function. In Mus musculus (Mouse), this protein is Pyridine nucleotide-disulfide oxidoreductase domain-containing protein 2.